A 365-amino-acid chain; its full sequence is Ribosomal RNA large subunit methyltransferase F (365 aa).

Residues 1 to 49 form a disordered region; it reads MSKPAVKSVQSATAKTATRAVNIRQKVKAPKQAKPEAKGRVRPSKDKPR. Over residues 33–49 the composition is skewed to basic and acidic residues; it reads AKPEAKGRVRPSKDKPR.

This sequence belongs to the methyltransferase superfamily. METTL16/RlmF family.

It is found in the cytoplasm. The catalysed reaction is adenosine(1618) in 23S rRNA + S-adenosyl-L-methionine = N(6)-methyladenosine(1618) in 23S rRNA + S-adenosyl-L-homocysteine + H(+). Its function is as follows. Specifically methylates the adenine in position 1618 of 23S rRNA. The polypeptide is Ribosomal RNA large subunit methyltransferase F (Shewanella baltica (strain OS185)).